We begin with the raw amino-acid sequence, 1288 residues long: Mitogen-activated protein kinase kinase kinase 6 (1288 aa).

The 259-residue stretch at 648–906 folds into the Protein kinase domain; it reads TGERLVLGKG…AQTLLGDPFL (259 aa). ATP-binding positions include 654–662 and K677; that span reads LGKGTYGVV. D771 functions as the Proton acceptor in the catalytic mechanism. T806 carries the phosphothreonine modification. Residues 899–997 form a disordered region; it reads TLLGDPFLQP…SSGLSLLHQE (99 aa). Low complexity predominate over residues 914–952; sequence SPSSPRHAPRPSDAPSASPTPSANSTTQSQTFPCPQAPS. A phosphoserine mark is found at S964 and S984. The span at 980-989 shows a compositional bias: low complexity; that stretch reads EEPASPEESS. Positions 1004 to 1029 form a coiled coil; that stretch reads LAAVLEQELPALAENLHQEQKQEQGA. Residues 1123–1134 are compositionally biased toward basic and acidic residues; the sequence is VEKEAVSPRSEE. Residues 1123–1157 form a disordered region; that stretch reads VEKEAVSPRSEELSNEGDSQQSPGQQSPLPVEPEQ. A phosphoserine mark is found at S1129 and S1149. The segment covering 1141–1151 has biased composition (low complexity); that stretch reads SQQSPGQQSPL. Positions 1166 to 1205 form a coiled coil; the sequence is LSLLRAETDRLREILAGKEREYQALVQRALQRLNEEARTY.

Belongs to the protein kinase superfamily. STE Ser/Thr protein kinase family. MAP kinase kinase kinase subfamily. Binds both upstream activators and downstream substrates in multimolecular complexes. Requires Mg(2+) as cofactor.

The enzyme catalyses L-seryl-[protein] + ATP = O-phospho-L-seryl-[protein] + ADP + H(+). The catalysed reaction is L-threonyl-[protein] + ATP = O-phospho-L-threonyl-[protein] + ADP + H(+). With respect to regulation, activated by phosphorylation on Thr-806. Catalytically active only when complexed with MAP3K5, with MAP3K5 supporting the stability and the active configuration of MAP3K6 and MAP3K6 activating MAP3K5 by direct phosphorylation. Its function is as follows. Component of a protein kinase signal transduction cascade. Activates the JNK, but not ERK or p38 kinase pathways. The protein is Mitogen-activated protein kinase kinase kinase 6 (MAP3K6) of Homo sapiens (Human).